A 365-amino-acid polypeptide reads, in one-letter code: Histidinol-phosphate aminotransferase (365 aa).

Position 220 is an N6-(pyridoxal phosphate)lysine (K220).

It belongs to the class-II pyridoxal-phosphate-dependent aminotransferase family. Histidinol-phosphate aminotransferase subfamily. As to quaternary structure, homodimer. Pyridoxal 5'-phosphate is required as a cofactor.

It carries out the reaction L-histidinol phosphate + 2-oxoglutarate = 3-(imidazol-4-yl)-2-oxopropyl phosphate + L-glutamate. The protein operates within amino-acid biosynthesis; L-histidine biosynthesis; L-histidine from 5-phospho-alpha-D-ribose 1-diphosphate: step 7/9. The sequence is that of Histidinol-phosphate aminotransferase from Neisseria meningitidis serogroup A / serotype 4A (strain DSM 15465 / Z2491).